The sequence spans 513 residues: Na(+)/H(+) antiporter NhaB (513 aa).

A run of 12 helical transmembrane segments spans residues 23–43, 52–72, 97–117, 120–140, 144–164, 202–222, 238–258, 303–323, 348–368, 391–411, 447–467, and 475–495; these read LALI…PFVA, IFTL…LLAI, LLLM…LFIF, LLLS…AAAF, FLDA…FYGI, LMMH…VGEP, FFLR…LTCL, AIIG…VGLI, TESL…AVII, LFYI…VGTI, ATPN…APLI, and VWMA…CVEF.

The protein belongs to the NhaB Na(+)/H(+) (TC 2.A.34) antiporter family.

The protein resides in the cell inner membrane. The enzyme catalyses 2 Na(+)(in) + 3 H(+)(out) = 2 Na(+)(out) + 3 H(+)(in). Functionally, na(+)/H(+) antiporter that extrudes sodium in exchange for external protons. In Escherichia coli O45:K1 (strain S88 / ExPEC), this protein is Na(+)/H(+) antiporter NhaB.